Consider the following 365-residue polypeptide: Elongation factor Tu (365 aa).

GTP-binding positions include 1–7, 62–66, and 117–120; these read HVDHGKT, DCPGH, and NKCD. One can recognise a tr-type G domain in the interval 1 to 185; sequence HVDHGKTTLT…TLDSYIPTPE (185 aa). Thr7 serves as a coordination point for Mg(2+).

It belongs to the TRAFAC class translation factor GTPase superfamily. Classic translation factor GTPase family. EF-Tu/EF-1A subfamily. In terms of assembly, monomer.

Its subcellular location is the cytoplasm. It catalyses the reaction GTP + H2O = GDP + phosphate + H(+). In terms of biological role, GTP hydrolase that promotes the GTP-dependent binding of aminoacyl-tRNA to the A-site of ribosomes during protein biosynthesis. The polypeptide is Elongation factor Tu (Buchnera aphidicola subsp. Schlechtendalia chinensis).